The following is a 272-amino-acid chain: Shikimate dehydrogenase (NADP(+)) (272 aa).

Shikimate contacts are provided by residues 14–16 and Thr61; that span reads SKS. Residue Lys65 is the Proton acceptor of the active site. Glu77 lines the NADP(+) pocket. Positions 86 and 102 each coordinate shikimate. Residues 126–130, 149–154, and Met213 contribute to the NADP(+) site; these read GAGGA and NRTASR. Tyr215 is a shikimate binding site. Gly237 lines the NADP(+) pocket.

This sequence belongs to the shikimate dehydrogenase family. As to quaternary structure, homodimer.

It carries out the reaction shikimate + NADP(+) = 3-dehydroshikimate + NADPH + H(+). It participates in metabolic intermediate biosynthesis; chorismate biosynthesis; chorismate from D-erythrose 4-phosphate and phosphoenolpyruvate: step 4/7. Its function is as follows. Involved in the biosynthesis of the chorismate, which leads to the biosynthesis of aromatic amino acids. Catalyzes the reversible NADPH linked reduction of 3-dehydroshikimate (DHSA) to yield shikimate (SA). In Salmonella choleraesuis (strain SC-B67), this protein is Shikimate dehydrogenase (NADP(+)).